Reading from the N-terminus, the 137-residue chain is ATP synthase epsilon chain, chloroplastic (137 aa).

The protein belongs to the ATPase epsilon chain family. In terms of assembly, F-type ATPases have 2 components, CF(1) - the catalytic core - and CF(0) - the membrane proton channel. CF(1) has five subunits: alpha(3), beta(3), gamma(1), delta(1), epsilon(1). CF(0) has three main subunits: a, b and c.

It localises to the plastid. Its subcellular location is the chloroplast thylakoid membrane. Its function is as follows. Produces ATP from ADP in the presence of a proton gradient across the membrane. This is ATP synthase epsilon chain, chloroplastic from Pinus koraiensis (Korean pine).